The following is a 75-amino-acid chain: ATP synthase subunit 9, mitochondrial (75 aa).

2 consecutive transmembrane segments (helical) span residues 10 to 30 (LVLG…GILF) and 55 to 75 (FALV…VYFI).

Belongs to the ATPase C chain family. In terms of assembly, F-type ATPases have 2 components, CF(1) - the catalytic core - and CF(0) - the membrane proton channel. CF(1) has five subunits: alpha(3), beta(3), gamma(1), delta(1), epsilon(1). CF(0) has three main subunits: a, b and c.

The protein localises to the mitochondrion membrane. In terms of biological role, mitochondrial membrane ATP synthase (F(1)F(0) ATP synthase or Complex V) produces ATP from ADP in the presence of a proton gradient across the membrane which is generated by electron transport complexes of the respiratory chain. F-type ATPases consist of two structural domains, F(1) - containing the extramembraneous catalytic core and F(0) - containing the membrane proton channel, linked together by a central stalk and a peripheral stalk. During catalysis, ATP synthesis in the catalytic domain of F(1) is coupled via a rotary mechanism of the central stalk subunits to proton translocation. Part of the complex F(0) domain. A homomeric c-ring of probably 10 subunits is part of the complex rotary element. The sequence is that of ATP synthase subunit 9, mitochondrial (ATP9) from Paramecium tetraurelia.